We begin with the raw amino-acid sequence, 271 residues long: Magnesium dechelatase SGR2, chloroplastic (271 aa).

A chloroplast-targeting transit peptide spans 1–54; sequence MCSLATNLLLPSKMKPVFPEKLSTSSLCVTTRRSKMKNRSIVPVARLFGPAIFE.

Belongs to the staygreen family. Interacts with the light harvesting complex II (LHCII). Interacts with the chlorophyll catabolic enzyme (CCE) RCCR.

Its subcellular location is the plastid. It is found in the chloroplast thylakoid membrane. It catalyses the reaction chlorophyll a + 2 H(+) = pheophytin a + Mg(2+). Functionally, magnesium chelatase involved in chlorophyll a degradation in the chlorophyll-protein complexes of photosystem I (PSI) and photosystem II (PSII). Contributes to the degradation of PSI and PSII in the thylakoid membranes. Required to trigger chlorophyll degradation during natural and dark-induced leaf senescence. Mediates chlorophyll degradation during embryo degreening. Recombinant SGR2 possesses high dechelating activity against chlorophyll a, very low activity against chlorophyllide a, and no activity against chlorophyll b. The protein is Magnesium dechelatase SGR2, chloroplastic of Arabidopsis thaliana (Mouse-ear cress).